Reading from the N-terminus, the 351-residue chain is Selenide, water dikinase (351 aa).

U15 is an active-site residue. U15 is a non-standard amino acid (selenocysteine). Residues K18 and 47-49 (DNE) contribute to the ATP site. Mg(2+) is bound at residue D50. ATP contacts are provided by residues D67, D90, and 138–140 (GHS). Position 90 (D90) interacts with Mg(2+). D227 contacts Mg(2+).

This sequence belongs to the selenophosphate synthase 1 family. Class I subfamily. Homodimer. Mg(2+) serves as cofactor.

It carries out the reaction hydrogenselenide + ATP + H2O = selenophosphate + AMP + phosphate + 2 H(+). Functionally, synthesizes selenophosphate from selenide and ATP. The protein is Selenide, water dikinase of Nitratidesulfovibrio vulgaris (strain DP4) (Desulfovibrio vulgaris).